The chain runs to 215 residues: Pyrrolidone-carboxylate peptidase (215 aa).

Residues Glu-80, Cys-143, and His-167 contribute to the active site.

Belongs to the peptidase C15 family. In terms of assembly, homotetramer.

It localises to the cytoplasm. It carries out the reaction Release of an N-terminal pyroglutamyl group from a polypeptide, the second amino acid generally not being Pro.. Functionally, removes 5-oxoproline from various penultimate amino acid residues except L-proline. The sequence is that of Pyrrolidone-carboxylate peptidase from Bacillus cereus (strain B4264).